A 135-amino-acid chain; its full sequence is Protein 4.7 (135 aa).

This Escherichia coli (Bacteriophage T7) protein is Protein 4.7.